The following is a 225-amino-acid chain: MAEKEEGVKLIGSWASPFSRRVEMALKLKGVPYDYLDEDYLVVKSPLLLQLNPVYKKVPVLVHNGKILPESQLILEYIDQTWTNNPILPQSPYDKAMARFWAKFVDEQVTMIGLRSLVKSEKRIDVAIEEVQELIMLLENQITGKKLFGGETIGFLDMVVGSMIPFCLARAWEGMGIDMIPEEKFPELNRWIKNLKEIEIVRECIPDREKHIEHMMKIVGRIKAV.

The GST N-terminal domain maps to 6–86 (EGVKLIGSWA…YIDQTWTNNP (81 aa)). Residues 16 to 17 (SP), 43 to 44 (VK), 57 to 58 (KV), and 70 to 71 (ES) each bind glutathione. One can recognise a GST C-terminal domain in the interval 91–218 (SPYDKAMARF…EKHIEHMMKI (128 aa)). Thr-152 carries the phosphothreonine modification.

It belongs to the GST superfamily. Tau family.

It is found in the cytoplasm. Its subcellular location is the cytosol. The catalysed reaction is RX + glutathione = an S-substituted glutathione + a halide anion + H(+). Functionally, may be involved in the conjugation of reduced glutathione to a wide number of exogenous and endogenous hydrophobic electrophiles and have a detoxification role against certain herbicides. The polypeptide is Glutathione S-transferase U3 (GSTU3) (Arabidopsis thaliana (Mouse-ear cress)).